Here is a 64-residue protein sequence, read N- to C-terminus: uncharacterized protein (64 aa).

In terms of tissue distribution, widely expressed; not found in breast.

This is an uncharacterized protein from Homo sapiens (Human).